Reading from the N-terminus, the 160-residue chain is Ureidoglycolate lyase (160 aa).

It belongs to the ureidoglycolate lyase family. Homodimer. Requires Ni(2+) as cofactor.

It catalyses the reaction (S)-ureidoglycolate = urea + glyoxylate. The protein operates within nitrogen metabolism; (S)-allantoin degradation. Catalyzes the catabolism of the allantoin degradation intermediate (S)-ureidoglycolate, generating urea and glyoxylate. Involved in the utilization of allantoin as nitrogen source. The polypeptide is Ureidoglycolate lyase (Salmonella enteritidis).